Here is a 209-residue protein sequence, read N- to C-terminus: Ribosomal RNA large subunit methyltransferase E (209 aa).

S-adenosyl-L-methionine contacts are provided by glycine 60, tryptophan 62, aspartate 80, aspartate 96, and aspartate 121. Lysine 161 (proton acceptor) is an active-site residue. A compositionally biased stretch (basic and acidic residues) spans 182–196 (VQMRKPSSSRDRSRE). Positions 182 to 209 (VQMRKPSSSRDRSREQYLLGRGFRGRSE) are disordered.

This sequence belongs to the class I-like SAM-binding methyltransferase superfamily. RNA methyltransferase RlmE family.

Its subcellular location is the cytoplasm. It carries out the reaction uridine(2552) in 23S rRNA + S-adenosyl-L-methionine = 2'-O-methyluridine(2552) in 23S rRNA + S-adenosyl-L-homocysteine + H(+). Functionally, specifically methylates the uridine in position 2552 of 23S rRNA at the 2'-O position of the ribose in the fully assembled 50S ribosomal subunit. This Pseudomonas fluorescens (strain ATCC BAA-477 / NRRL B-23932 / Pf-5) protein is Ribosomal RNA large subunit methyltransferase E.